Reading from the N-terminus, the 128-residue chain is Holo-[acyl-carrier-protein] synthase (128 aa).

Mg(2+) is bound by residues Asp-8 and Glu-57.

The protein belongs to the P-Pant transferase superfamily. AcpS family. Mg(2+) serves as cofactor.

It is found in the cytoplasm. It carries out the reaction apo-[ACP] + CoA = holo-[ACP] + adenosine 3',5'-bisphosphate + H(+). Its function is as follows. Transfers the 4'-phosphopantetheine moiety from coenzyme A to a Ser of acyl-carrier-protein. In Syntrophus aciditrophicus (strain SB), this protein is Holo-[acyl-carrier-protein] synthase.